Here is a 114-residue protein sequence, read N- to C-terminus: ATP synthase epsilon chain (114 aa).

Belongs to the ATPase epsilon chain family. F-type ATPases have 2 components, CF(1) - the catalytic core - and CF(0) - the membrane proton channel. CF(1) has five subunits: alpha(3), beta(3), gamma(1), delta(1), epsilon(1). CF(0) has three main subunits: a, b and c.

The protein localises to the cell membrane. Functionally, produces ATP from ADP in the presence of a proton gradient across the membrane. This is ATP synthase epsilon chain from Wolbachia pipientis wMel.